The sequence spans 330 residues: Ferredoxin--NADP reductase (330 aa).

Glutamate 35, glutamine 43, tyrosine 48, valine 90, phenylalanine 123, aspartate 285, and threonine 326 together coordinate FAD.

The protein belongs to the ferredoxin--NADP reductase type 2 family. As to quaternary structure, homodimer. The cofactor is FAD.

It carries out the reaction 2 reduced [2Fe-2S]-[ferredoxin] + NADP(+) + H(+) = 2 oxidized [2Fe-2S]-[ferredoxin] + NADPH. In Streptococcus pyogenes serotype M2 (strain MGAS10270), this protein is Ferredoxin--NADP reductase.